We begin with the raw amino-acid sequence, 180 residues long: Cytidylate kinase 2 (180 aa).

7-15 (GKSGCGNTT) is an ATP binding site.

This sequence belongs to the cytidylate kinase family. Type 2 subfamily.

The protein resides in the cytoplasm. It carries out the reaction CMP + ATP = CDP + ADP. It catalyses the reaction dCMP + ATP = dCDP + ADP. This is Cytidylate kinase 2 (cmk2) from Borreliella burgdorferi (strain ATCC 35210 / DSM 4680 / CIP 102532 / B31) (Borrelia burgdorferi).